A 164-amino-acid chain; its full sequence is Protein SprT (164 aa).

The SprT-like domain maps to 12 to 157 (CFLQAESFFK…CRRCRQTLVF (146 aa)). His-69 lines the Zn(2+) pocket. Glu-70 is a catalytic residue. Residue His-73 coordinates Zn(2+).

Belongs to the SprT family. Zn(2+) serves as cofactor.

It is found in the cytoplasm. The polypeptide is Protein SprT (Pseudomonas fluorescens (strain SBW25)).